The primary structure comprises 101 residues: C-X-C motif chemokine 3 (101 aa).

The first 32 residues, 1 to 32 (MAPPTRRLLNAALLLLLLLMATSHQPSGTVVA), serve as a signal peptide directing secretion. 2 disulfides stabilise this stretch: Cys37/Cys63 and Cys39/Cys79.

This sequence belongs to the intercrine alpha (chemokine CxC) family.

It localises to the secreted. Its function is as follows. Ligand for CXCR2. Has chemotactic activity for neutrophils. May play a role in inflammation and exert its effects on endothelial cells in an autocrine fashion. The chain is C-X-C motif chemokine 3 (Cxcl3) from Rattus norvegicus (Rat).